The sequence spans 671 residues: Probable potassium transport system protein Kup 2 (671 aa).

The next 12 membrane-spanning stretches (helical) occupy residues 18–38, 60–80, 103–123, 149–169, 173–193, 218–238, 252–272, 292–312, 343–363, 373–393, 402–422, and 424–444; these read GFLIALGIVYGDIGTSPLYAM, VSLVIWTLTLITTVKYVLIAL, WLIVPAMIGGATLLADGALTP, VTTLIILAFLFLIQRFGASLV, FGPIMFIWFGFLGVSGLINSF, AGFFILGSIFLVTTGAEALYS, WPFVKICIILSYCGQGAWLLA, MVIYVVILSTLAAIIASQALI, LYIPAVNFALWVTTSFFVLYF, YSLAITITMLMTTTLLTYFLI, IAFISIGLFCIEGSFFAASLV, and FINGAYIVVLIALAIIFVMFI.

It belongs to the HAK/KUP transporter (TC 2.A.72) family.

The protein resides in the cell membrane. It carries out the reaction K(+)(in) + H(+)(in) = K(+)(out) + H(+)(out). Its function is as follows. Transport of potassium into the cell. Likely operates as a K(+):H(+) symporter. The sequence is that of Probable potassium transport system protein Kup 2 from Lactococcus lactis subsp. cremoris (strain MG1363).